Consider the following 682-residue polypeptide: Potassium-transporting ATPase ATP-binding subunit (682 aa).

4 helical membrane passes run 34–54 (PVMF…LAMV), 58–78 (IAGS…TVLF), 219–239 (IALT…TATL), and 254–274 (VLVA…LSAI). Asp-307 serves as the catalytic 4-aspartylphosphate intermediate. ATP is bound by residues Asp-344, Glu-348, 377–384 (FTAQSRMS), and Lys-395. Residues Asp-518 and Asp-522 each coordinate Mg(2+). 3 helical membrane-spanning segments follow: residues 588 to 608 (FAII…LNVM), 616 to 636 (AILS…PLAL), and 662 to 682 (LVVP…LGLA).

This sequence belongs to the cation transport ATPase (P-type) (TC 3.A.3) family. Type IA subfamily. As to quaternary structure, the system is composed of three essential subunits: KdpA, KdpB and KdpC.

Its subcellular location is the cell inner membrane. It catalyses the reaction K(+)(out) + ATP + H2O = K(+)(in) + ADP + phosphate + H(+). Functionally, part of the high-affinity ATP-driven potassium transport (or Kdp) system, which catalyzes the hydrolysis of ATP coupled with the electrogenic transport of potassium into the cytoplasm. This subunit is responsible for energy coupling to the transport system and for the release of the potassium ions to the cytoplasm. The chain is Potassium-transporting ATPase ATP-binding subunit from Salmonella newport (strain SL254).